A 205-amino-acid chain; its full sequence is FAS-associated death domain protein (205 aa).

Positions 3–81 (PFLVLLHSLS…RHDLLQRLDD (79 aa)) constitute a DED domain. One can recognise a Death domain in the interval 97–181 (LQVAFDIVCD…LVADLVEEAQ (85 aa)). The interval 181–205 (QESVSKSENMSPVLRDSTVSSSETP) is disordered. Ser191 carries the post-translational modification Phosphoserine.

Can self-associate. Component of the AIM2 PANoptosome complex, a multiprotein complex that drives inflammatory cell death (PANoptosis). Component of the death-induced signaling complex (DISC) composed of cell surface receptor FAS/CD95 or TNFRSF1A, adapter protein FADD and the CASP8 protease; recruitment of CASP8 to the complex is required for processing of CASP8 into the p18 and p10 subunits. Interacts (via death domain) with FAS (via death domain). Interacts directly (via DED domain) with NOL3 (via CARD domain); inhibits death-inducing signaling complex (DISC) assembly by inhibiting the increase in FAS-FADD binding induced by FAS activation. Interacts with CFLAR, PEA15 and MBD4. When phosphorylated, part of a complex containing HIPK3 and FAS. May interact with MAVS/IPS1. Interacts with MOCV v-CFLAR protein and PIDD1. Interacts with RIPK1 and TRADD. Interacts with stimulated TNFRSF10B. Interacts with DDX24.

Its subcellular location is the cytoplasm. Its function is as follows. Apoptotic adapter molecule that recruits caspases CASP8 or CASP10 to the activated FAS/CD95 or TNFRSF1A/TNFR-1 receptors. The resulting aggregate called the death-inducing signaling complex (DISC) performs CASP8 proteolytic activation. Active CASP8 initiates the subsequent cascade of caspases mediating apoptosis. Involved in interferon-mediated antiviral immune response, playing a role in the positive regulation of interferon signaling. This Mus musculus (Mouse) protein is FAS-associated death domain protein.